The sequence spans 637 residues: Capsid scaffolding protein (637 aa).

Residues His61, Ser129, and His148 each act as charge relay system in the active site. Disordered stretches follow at residues 262–326, 414–479, and 502–608; these read PERG…PGDG, LPAA…PHET, and HAPY…EAGA. The segment covering 277–317 has biased composition (low complexity); that stretch reads SPAASVPAPQVAVRARQVASSSSSSSFPAPADMNPVSASGA. An interaction with pAP region spans residues 326 to 345; that stretch reads GSYLWIPASHYNQLVTGQSA. The short motif at 428–431 is the Nuclear localization signal element; sequence KRRR. Composition is skewed to basic and acidic residues over residues 432 to 450 and 457 to 468; these read HEVE…DRDF and ARPEPRPVDSRR. 2 stretches are compositionally biased toward pro residues: residues 537–559 and 566–594; these read LPPP…PSYP and GPAP…PPAA. Low complexity predominate over residues 595–608; the sequence is SLPQPEAPGAEAGA. An interaction with major capsid protein region spans residues 617–637; that stretch reads HVNVDTARAADLFVSQMMGSR.

Belongs to the herpesviridae capsid scaffolding protein family. In terms of assembly, homomultimer. Interacts with major capsid protein. Exists in a monomer-dimer equilibrium with the dimer being the active species. In terms of processing, capsid scaffolding protein is cleaved by assemblin after formation of the spherical procapsid. As a result, the capsid obtains its mature, icosahedral shape. Cleavages occur at two or more sites: release (R-site) and maturation (M-site).

Its subcellular location is the host cytoplasm. It localises to the host nucleus. The enzyme catalyses Cleaves -Ala-|-Ser- and -Ala-|-Ala- bonds in the scaffold protein.. In terms of biological role, acts as a scaffold protein by binding major capsid protein in the cytoplasm, inducing the nuclear localization of both proteins. Multimerizes in the nucleus such as major capsid protein forms the icosahedral T=16 capsid. Autocatalytic cleavage releases the assembly protein, and subsequently abolishes interaction with major capsid protein. Cleavages products are evicted from the capsid before or during DNA packaging. Protease that plays an essential role in virion assembly within the nucleus. Catalyzes the cleavage of the assembly protein after formation of the spherical procapsid. By that cleavage, the capsid matures and gains its icosahedral shape. The cleavage sites seem to include -Ala-Ser-, -Ala-Ala-, as well as Ala-Thr bonds. Assemblin and cleavages products are evicted from the capsid before or during DNA packaging. Its function is as follows. Plays a major role in capsid assembly. Acts as a scaffold protein by binding major capsid protein. Multimerizes in the nucleus such as major capsid protein forms the icosahedral T=16 capsid. Cleaved by assemblin after capsid completion. The cleavages products are evicted from the capsid before or during DNA packaging. The protein is Capsid scaffolding protein (UL26) of Homo sapiens (Human).